Reading from the N-terminus, the 331-residue chain is T-cell acute lymphocytic leukemia protein 1 (331 aa).

Positions 1–22 are enriched in basic and acidic residues; the sequence is MTERPPSEAARSDPQLEGRDAA. Disordered regions lie at residues 1-27 and 40-86; these read MTER…ASMA and ETSR…EARH. Residue Ser12 is modified to Phosphoserine. Residues 56–70 show a composition bias toward gly residues; the sequence is ARGGPGGGPAGGGGA. Over residues 72 to 86 the composition is skewed to basic and acidic residues; sequence RDLKGRDAATAEARH. 2 positions are modified to phosphoserine: Ser122 and Ser172. The bHLH domain maps to 187 to 239; it reads VRRIFTNSRERWRQQNVNGAFAELRKLIPTHPPDKKLSKNEILRLAMKYINFL. Positions 249-331 are disordered; sequence EGTQRAKTGK…LPAADGAGPR (83 aa). The span at 263-275 shows a compositional bias: gly residues; that stretch reads GAGGGGGGGGGGA.

In terms of assembly, efficient DNA binding requires dimerization with another bHLH protein. Forms heterodimers with TCF3. Binds to the LIM domain containing protein LMO2 and to DRG1. Can assemble in a complex with LDB1 and LMO2. Component of a TAL-1 complex composed at least of CBFA2T3, LDB1, TAL1 and TCF3. Interacts with SBNO2; this interaction inhibits TAL1 occupancy of the DCSTAMP promoter, leading to the activation of the DCSTAMP promoter by the transcription factor MITF. Post-translationally, phosphorylated on serine residues. Phosphorylation of Ser-122 is strongly stimulated by hypoxia. Ubiquitinated; subsequent to hypoxia-dependent phosphorylation of Ser-122, ubiquitination targets the protein for rapid degradation via the ubiquitin system. This process may be characteristic for microvascular endothelial cells, since it could not be observed in large vessel endothelial cells. As to expression, leukemic stem cell.

The protein localises to the nucleus. In terms of biological role, implicated in the genesis of hemopoietic malignancies. It may play an important role in hemopoietic differentiation. Serves as a positive regulator of erythroid differentiation. The sequence is that of T-cell acute lymphocytic leukemia protein 1 (TAL1) from Homo sapiens (Human).